Here is a 424-residue protein sequence, read N- to C-terminus: GTPase Obg (424 aa).

Residues 2 to 158 (AKFIDQVKIM…YEANIVLKIL (157 aa)) enclose the Obg domain. The 168-residue stretch at 159 to 326 (SDVGLVGLPS…LKKIIWEFLE (168 aa)) folds into the OBG-type G domain. GTP is bound by residues 165–172 (GLPSCGKS), 190–194 (FTTLV), 211–214 (DLPG), 280–283 (NKSD), and 307–309 (SAL). Ser-172 and Thr-192 together coordinate Mg(2+). The OCT domain occupies 344–422 (KEINYEPDFV…IYQHKFEWEE (79 aa)).

This sequence belongs to the TRAFAC class OBG-HflX-like GTPase superfamily. OBG GTPase family. In terms of assembly, monomer. Requires Mg(2+) as cofactor.

The protein localises to the cytoplasm. Its function is as follows. An essential GTPase which binds GTP, GDP and possibly (p)ppGpp with moderate affinity, with high nucleotide exchange rates and a fairly low GTP hydrolysis rate. Plays a role in control of the cell cycle, stress response, ribosome biogenesis and in those bacteria that undergo differentiation, in morphogenesis control. The sequence is that of GTPase Obg from Mycoplasmopsis synoviae (strain 53) (Mycoplasma synoviae).